The following is a 663-amino-acid chain: Leishmanolysin-like peptidase (663 aa).

His246 contributes to the Zn(2+) binding site. The active site involves Glu247. Zn(2+) is bound by residues His250 and His353.

The protein belongs to the peptidase M8 family. It depends on Zn(2+) as a cofactor.

Its subcellular location is the cytoplasm. Metalloprotease. This is Leishmanolysin-like peptidase from Caenorhabditis briggsae.